A 195-amino-acid polypeptide reads, in one-letter code: O-methyltransferase (195 aa).

This sequence belongs to the methyltransferase superfamily.

It functions in the pathway secondary metabolite biosynthesis. Its function is as follows. O-methyltransferase; part of the gene cluster that mediates the biosynthesis of pyrophen and campyrone B, which represent a class of fungal amino acid-derived alpha-pyrone natural products. The first step of pyrophen biosynthesis is catalyzed by the PKS-NRPS hybrid synthetase ATPKS that uptakes and condensates L-phenylalanine and malonyl-CoA in order to produce desmethyldesacetylpyrophen. Although the A domain does not discriminate between 2 enantiomeric phenylalanines, the downstream KS domain must play a gate keeping role to stereoselectively accept the L-phenylalanyl-S-phosphopantetheine (Ppant)-T domain intermediate for chain elongation. The resulting amino acid derived diketide is off-loaded through lactonization to yield the alpha-pyrone intermediate desmethyldesacetylpyrophen. The cluster-specific O-methyltransferase (OMT) then methylates desmethyldesacetylpyrophen to desacetylpyrophen, which is further acetylated to pyrophen by an endogenous yet unidentified N-acetyltransferase. ATPKS has relaxed substrate specificity to activate and extend branched-chain amino acid L-leucine to produce small amounts of campyrone B. The protein is O-methyltransferase of Aspergillus niger (strain ATCC 1015 / CBS 113.46 / FGSC A1144 / LSHB Ac4 / NCTC 3858a / NRRL 328 / USDA 3528.7).